Reading from the N-terminus, the 259-residue chain is Small ribosomal subunit protein eS1 (259 aa).

Disordered stretches follow at residues 1–23 and 235–259; these read MAVG…KTAD and ESKS…VDSV. The segment covering 8–19 has biased composition (basic residues); it reads KVTKGGKKGGKK. Residues 246–259 show a composition bias toward basic and acidic residues; that stretch reads SRPDHYEPPKVDSV.

Belongs to the eukaryotic ribosomal protein eS1 family. In terms of assembly, component of the small ribosomal subunit. Mature ribosomes consist of a small (40S) and a large (60S) subunit. The 40S subunit contains about 33 different proteins and 1 molecule of RNA (18S). The 60S subunit contains about 49 different proteins and 3 molecules of RNA (28S, 5.8S and 5S).

It is found in the cytoplasm. In Schistosoma japonicum (Blood fluke), this protein is Small ribosomal subunit protein eS1.